A 445-amino-acid chain; its full sequence is tRNA-2-methylthio-N(6)-dimethylallyladenosine synthase (445 aa).

The 122-residue stretch at 3-124 (KKLYIKTYGC…LPELISKVVR (122 aa)) folds into the MTTase N-terminal domain. Residues Cys12, Cys48, Cys87, Cys162, Cys166, and Cys169 each coordinate [4Fe-4S] cluster. A Radical SAM core domain is found at 148–380 (YPQGASSFIS…QQELTAQQLA (233 aa)). In terms of domain architecture, TRAM spans 383–445 (ESCVGSIMKV…ASNSLTGEVI (63 aa)).

Belongs to the methylthiotransferase family. MiaB subfamily. Monomer. Requires [4Fe-4S] cluster as cofactor.

The protein resides in the cytoplasm. The catalysed reaction is N(6)-dimethylallyladenosine(37) in tRNA + (sulfur carrier)-SH + AH2 + 2 S-adenosyl-L-methionine = 2-methylsulfanyl-N(6)-dimethylallyladenosine(37) in tRNA + (sulfur carrier)-H + 5'-deoxyadenosine + L-methionine + A + S-adenosyl-L-homocysteine + 2 H(+). Functionally, catalyzes the methylthiolation of N6-(dimethylallyl)adenosine (i(6)A), leading to the formation of 2-methylthio-N6-(dimethylallyl)adenosine (ms(2)i(6)A) at position 37 in tRNAs that read codons beginning with uridine. This is tRNA-2-methylthio-N(6)-dimethylallyladenosine synthase from Rickettsia felis (strain ATCC VR-1525 / URRWXCal2) (Rickettsia azadi).